Reading from the N-terminus, the 1373-residue chain is DNA-directed RNA polymerase subunit beta'' (1373 aa).

Zn(2+) contacts are provided by cysteine 220, cysteine 293, cysteine 300, and cysteine 303.

The protein belongs to the RNA polymerase beta' chain family. RpoC2 subfamily. In plastids the minimal PEP RNA polymerase catalytic core is composed of four subunits: alpha, beta, beta', and beta''. When a (nuclear-encoded) sigma factor is associated with the core the holoenzyme is formed, which can initiate transcription. Zn(2+) is required as a cofactor.

Its subcellular location is the plastid. The protein localises to the chloroplast. It carries out the reaction RNA(n) + a ribonucleoside 5'-triphosphate = RNA(n+1) + diphosphate. In terms of biological role, DNA-dependent RNA polymerase catalyzes the transcription of DNA into RNA using the four ribonucleoside triphosphates as substrates. This is DNA-directed RNA polymerase subunit beta'' from Lepidium virginicum (Virginia pepperweed).